The chain runs to 221 residues: Crossover junction endodeoxyribonuclease RuvC (221 aa).

Active-site residues include D12, E73, and D146. The Mg(2+) site is built by D12, E73, and D146. The segment at 169 to 221 is disordered; it reads SQYSEQELEKRRRVQQGKLGKAKSTYNAEQAQSHASDPAKAAHPSQFQRTDTN. The span at 192 to 203 shows a compositional bias: polar residues; sequence STYNAEQAQSHA.

This sequence belongs to the RuvC family. In terms of assembly, homodimer which binds Holliday junction (HJ) DNA. The HJ becomes 2-fold symmetrical on binding to RuvC with unstacked arms; it has a different conformation from HJ DNA in complex with RuvA. In the full resolvosome a probable DNA-RuvA(4)-RuvB(12)-RuvC(2) complex forms which resolves the HJ. It depends on Mg(2+) as a cofactor.

The protein resides in the cytoplasm. The catalysed reaction is Endonucleolytic cleavage at a junction such as a reciprocal single-stranded crossover between two homologous DNA duplexes (Holliday junction).. Functionally, the RuvA-RuvB-RuvC complex processes Holliday junction (HJ) DNA during genetic recombination and DNA repair. Endonuclease that resolves HJ intermediates. Cleaves cruciform DNA by making single-stranded nicks across the HJ at symmetrical positions within the homologous arms, yielding a 5'-phosphate and a 3'-hydroxyl group; requires a central core of homology in the junction. The consensus cleavage sequence is 5'-(A/T)TT(C/G)-3'. Cleavage occurs on the 3'-side of the TT dinucleotide at the point of strand exchange. HJ branch migration catalyzed by RuvA-RuvB allows RuvC to scan DNA until it finds its consensus sequence, where it cleaves and resolves the cruciform DNA. This Corynebacterium glutamicum (strain ATCC 13032 / DSM 20300 / JCM 1318 / BCRC 11384 / CCUG 27702 / LMG 3730 / NBRC 12168 / NCIMB 10025 / NRRL B-2784 / 534) protein is Crossover junction endodeoxyribonuclease RuvC.